Reading from the N-terminus, the 314-residue chain is 2,3-dihydroxyphenylpropionate/2,3-dihydroxicinnamic acid 1,2-dioxygenase (314 aa).

The active-site Proton donor is H115. Residue H179 is the Proton acceptor of the active site.

Belongs to the LigB/MhpB extradiol dioxygenase family. As to quaternary structure, homotetramer. The cofactor is Fe(2+).

The enzyme catalyses 3-(2,3-dihydroxyphenyl)propanoate + O2 = (2Z,4E)-2-hydroxy-6-oxonona-2,4-dienedioate + H(+). It carries out the reaction (2E)-3-(2,3-dihydroxyphenyl)prop-2-enoate + O2 = (2Z,4E,7E)-2-hydroxy-6-oxonona-2,4,7-trienedioate + H(+). It functions in the pathway aromatic compound metabolism; 3-phenylpropanoate degradation. In terms of biological role, catalyzes the non-heme iron(II)-dependent oxidative cleavage of 2,3-dihydroxyphenylpropionic acid and 2,3-dihydroxicinnamic acid into 2-hydroxy-6-ketononadienedioate and 2-hydroxy-6-ketononatrienedioate, respectively. The polypeptide is 2,3-dihydroxyphenylpropionate/2,3-dihydroxicinnamic acid 1,2-dioxygenase (Escherichia coli O81 (strain ED1a)).